A 127-amino-acid polypeptide reads, in one-letter code: Multifunctional methyltransferase subunit trm112 (127 aa).

In terms of domain architecture, TRM112 spans 2 to 123 (KVMTLNFLTC…KNGVANFLLP (122 aa)).

Belongs to the TRM112 family. Heterodimer of mtq2-rmt-1/trm112, forming the eRF1 methyltransferase. Rmt-1/trm112 is necessary for the solubility and activity of the catalytic subunit mtq2. Interacts with trm11; required for full tRNA methyltransferase activity. Interacts with bud23; required for full rRNA methyltransferase activity.

The protein resides in the cytoplasm. The protein localises to the nucleus. In terms of biological role, acts as an activator of both rRNA/tRNA and protein methyltransferases. Together with methyltransferase mtq2, required for the methylation of eRF1 on 'Gln-182'. Together with methyltransferase trm11, required for the formation of 2-methylguanosine at position 10 (m2G10) in tRNA. Together with methyltransferase bud23, required for the formation of a 7-methylguanine in 18S rRNA. Involved in biogenesis of both 40S and 60S ribosomal subunits. This is Multifunctional methyltransferase subunit trm112 (rmt-1) from Neurospora crassa (strain ATCC 24698 / 74-OR23-1A / CBS 708.71 / DSM 1257 / FGSC 987).